Here is a 63-residue protein sequence, read N- to C-terminus: MPKIKTHRGAAKRFKQTAGGKWKGSHAFHSHILGKKTAKRKRNLRKVTVISMADARRLKRLLP.

Positions 1 to 15 are enriched in basic residues; that stretch reads MPKIKTHRGAAKRFK. Residues 1-26 are disordered; sequence MPKIKTHRGAAKRFKQTAGGKWKGSH.

Belongs to the bacterial ribosomal protein bL35 family.

In Pelotomaculum thermopropionicum (strain DSM 13744 / JCM 10971 / SI), this protein is Large ribosomal subunit protein bL35.